The sequence spans 503 residues: Beta-amylase Tri a 17 (503 aa).

Positions 51, 91, and 99 each coordinate substrate. Residue E184 is the Proton donor of the active site. Residues K293, H298, and T340 each contribute to the substrate site. The active-site Proton acceptor is E378. Substrate contacts are provided by residues 379-380 (NA) and R418.

This sequence belongs to the glycosyl hydrolase 14 family.

The catalysed reaction is Hydrolysis of (1-&gt;4)-alpha-D-glucosidic linkages in polysaccharides so as to remove successive maltose units from the non-reducing ends of the chains.. The protein is Beta-amylase Tri a 17 (BMY1) of Triticum aestivum (Wheat).